Reading from the N-terminus, the 472-residue chain is 3-isopropylmalate dehydratase large subunit (472 aa).

Residues Cys347, Cys409, and Cys412 each contribute to the [4Fe-4S] cluster site.

Belongs to the aconitase/IPM isomerase family. LeuC type 1 subfamily. As to quaternary structure, heterodimer of LeuC and LeuD. [4Fe-4S] cluster is required as a cofactor.

The enzyme catalyses (2R,3S)-3-isopropylmalate = (2S)-2-isopropylmalate. Its pathway is amino-acid biosynthesis; L-leucine biosynthesis; L-leucine from 3-methyl-2-oxobutanoate: step 2/4. In terms of biological role, catalyzes the isomerization between 2-isopropylmalate and 3-isopropylmalate, via the formation of 2-isopropylmaleate. The protein is 3-isopropylmalate dehydratase large subunit of Salinibacter ruber (strain DSM 13855 / M31).